The chain runs to 541 residues: MGCIKSKENKSPAIKYTPENLTEPVSPSASHYGVEHATVAPTSSTKGASVNFNSLSMTPFGGSSGVTPFGGASSSFSVVSSSYPTGLTGGVTIFVALYDYEARTTEDLSFKKGERFQIINNTEGDWWEARSIATGKSGYIPSNYVVPADSIQAEEWYFGKMGRKDAERLLLNPGNQRGIFLVRESETTKGAYSLSIRDWDEVRGDNVKHYKIRKLDNGGYYITTRAQFDTLQKLVKHYTEHADGLCHKLTTVCPTVKPQTQGLAKDAWEIPRESLRLEVKLGQGCFGEVWMGTWNGTTKVAIKTLKPGTMMPEAFLQEAQIMKKLRHDKLVPLYAVVSEEPIYIVTEFMSKGSLLDFLKEGDGKYLKLPQLVDMAAQIADGMAYIERMNYIHRDLRAANILVGENLICKIADFGLARLIEDNEYTARQGAKFPIKWTAPEAALYGRFTIKSDVWSFGILQTELVTKGRVPYPGMVNREVLEQVERGYRMPCPQGCPESLHELMNLCWKKDPDERPTFEYIQSFLEDYFTATEPQYQPGENL.

Gly-2 carries N-myristoyl glycine lipidation. The S-palmitoyl cysteine; in membrane form moiety is linked to residue Cys-3. A Phosphotyrosine modification is found at Tyr-32. Positions 89-150 (GGVTIFVALY…PSNYVVPADS (62 aa)) constitute an SH3 domain. The 98-residue stretch at 156-253 (WYFGKMGRKD…GLCHKLTTVC (98 aa)) folds into the SH2 domain. A Protein kinase domain is found at 275-528 (LRLEVKLGQG…YIQSFLEDYF (254 aa)). ATP contacts are provided by residues 281 to 289 (LGQGCFGEV) and Lys-303. Tyr-334 and Tyr-343 each carry phosphotyrosine. The Proton acceptor role is filled by Asp-394. Tyr-424 carries the post-translational modification Phosphotyrosine; by autocatalysis. Tyr-535 carries the post-translational modification Phosphotyrosine.

This sequence belongs to the protein kinase superfamily. Tyr protein kinase family. SRC subfamily. As to quaternary structure, interacts with YAP1. Interacts with FASLG. Interacts with CTNND1; this interaction allows YES1-mediated activation of FYN and FER and subsequent phosphorylation of CTNND1. Interacts with CSF1R. Interacts with IL6ST/gp130. Interacts with SCRIB, when YES1 is in a closed conformation; the interaction facilitates YES1 autophosphorylation. Post-translationally, phosphorylated. Phosphorylation by CSK on the C-terminal tail maintains the enzyme in an inactive state. Autophosphorylation at Tyr-424 maintains enzyme activity by blocking CSK-mediated inhibition. In terms of processing, palmitoylation at Cys-3 promotes membrane localization.

The protein localises to the cell membrane. It localises to the cytoplasm. The protein resides in the cytoskeleton. It is found in the microtubule organizing center. Its subcellular location is the centrosome. The protein localises to the cytosol. It localises to the cell junction. It carries out the reaction L-tyrosyl-[protein] + ATP = O-phospho-L-tyrosyl-[protein] + ADP + H(+). Its function is as follows. Non-receptor protein tyrosine kinase that is involved in the regulation of cell growth and survival, apoptosis, cell-cell adhesion, cytoskeleton remodeling, and differentiation. Stimulation by receptor tyrosine kinases (RTKs) including EGFR, PDGFR, CSF1R and FGFR leads to recruitment of YES1 to the phosphorylated receptor, and activation and phosphorylation of downstream substrates. Upon EGFR activation, promotes the phosphorylation of PARD3 to favor epithelial tight junction assembly. Participates in the phosphorylation of specific junctional components such as CTNND1 by stimulating the FYN and FER tyrosine kinases at cell-cell contacts. Upon T-cell stimulation by CXCL12, phosphorylates collapsin response mediator protein 2/DPYSL2 and induces T-cell migration. Participates in CD95L/FASLG signaling pathway and mediates AKT-mediated cell migration. Plays a role in cell cycle progression by phosphorylating the cyclin dependent kinase 4/CDK4 thus regulating the G1 phase. Also involved in G2/M progression and cytokinesis. Catalyzes phosphorylation of organic cation transporter OCT2 which induces its transport activity. This chain is Tyrosine-protein kinase Yes (Yes1), found in Mus musculus (Mouse).